The primary structure comprises 332 residues: ATP-dependent 6-phosphofructokinase (332 aa).

Residue Gly-11 participates in ATP binding. 21 to 25 (RSVVR) contacts ADP. Residues 72-73 (RC) and 102-105 (GDGS) contribute to the ATP site. Asp-103 is a Mg(2+) binding site. 126–128 (TID) serves as a coordination point for substrate. The Proton acceptor role is filled by Asp-128. Arg-155 serves as a coordination point for ADP. Substrate-binding positions include Arg-163 and 170 to 172 (MGR). Residues 186 to 188 (GAE), Arg-212, and 214 to 216 (KLH) each bind ADP. Substrate-binding positions include Glu-223, Arg-256, and 262–265 (HIQR).

It belongs to the phosphofructokinase type A (PFKA) family. ATP-dependent PFK group I subfamily. Prokaryotic clade 'B1' sub-subfamily. In terms of assembly, homotetramer. Mg(2+) serves as cofactor.

Its subcellular location is the cytoplasm. It carries out the reaction beta-D-fructose 6-phosphate + ATP = beta-D-fructose 1,6-bisphosphate + ADP + H(+). The protein operates within carbohydrate degradation; glycolysis; D-glyceraldehyde 3-phosphate and glycerone phosphate from D-glucose: step 3/4. Its activity is regulated as follows. Allosterically activated by ADP and other diphosphonucleosides, and allosterically inhibited by phosphoenolpyruvate. Functionally, catalyzes the phosphorylation of D-fructose 6-phosphate to fructose 1,6-bisphosphate by ATP, the first committing step of glycolysis. This is ATP-dependent 6-phosphofructokinase from Halothermothrix orenii (strain H 168 / OCM 544 / DSM 9562).